Here is a 101-residue protein sequence, read N- to C-terminus: Small ribosomal subunit protein uS14 (101 aa).

Belongs to the universal ribosomal protein uS14 family. Part of the 30S ribosomal subunit. Contacts proteins S3 and S10.

In terms of biological role, binds 16S rRNA, required for the assembly of 30S particles and may also be responsible for determining the conformation of the 16S rRNA at the A site. In Neisseria gonorrhoeae (strain ATCC 700825 / FA 1090), this protein is Small ribosomal subunit protein uS14.